Here is a 302-residue protein sequence, read N- to C-terminus: MDKDKVLLVLHGKQAGNEEVRAAVAAQREAGRELAVRVTWEDGDARRIVEEALAAGYATLVAGGGDGTLREVAEALARGRGEASLAILPLGTANDFARAAGIPLEPAAALALLDQTARPIDLGEVNGKLFLNMATGGFGSKVTANTSEDLKKVLGGAAYLLTGLTRFSEVHAAQGRFSAPDFQWEGEFLALGIGNGRQAGGGHVLCPQARVDDGLLDVSILPTPQDMVGTLGTLLGGGNGVESLFVRARVPWLEVEAAEGLDVNLDGEPLEGRKLRFSVSPGALRVHLPAGSPLLREPPRED.

One can recognise a DAGKc domain in the interval 1–129 (MDKDKVLLVL…IDLGEVNGKL (129 aa)). Residues Thr-39, 65–71 (GDGTLRE), and Thr-92 contribute to the ATP site. Residues Arg-210, Asp-213, and Leu-215 each coordinate Mg(2+). Residue Glu-268 is the Proton acceptor of the active site.

This sequence belongs to the diacylglycerol/lipid kinase family. YegS lipid kinase subfamily. Requires Mg(2+) as cofactor. It depends on Ca(2+) as a cofactor.

It localises to the cytoplasm. Its function is as follows. Probably phosphorylates lipids; the in vivo substrate is unknown. This is Probable lipid kinase YegS-like from Pseudomonas aeruginosa (strain ATCC 15692 / DSM 22644 / CIP 104116 / JCM 14847 / LMG 12228 / 1C / PRS 101 / PAO1).